A 128-amino-acid polypeptide reads, in one-letter code: Large ribosomal subunit protein bL12 (128 aa).

It belongs to the bacterial ribosomal protein bL12 family. In terms of assembly, homodimer. Part of the ribosomal stalk of the 50S ribosomal subunit. Forms a multimeric L10(L12)X complex, where L10 forms an elongated spine to which 2 to 4 L12 dimers bind in a sequential fashion. Binds GTP-bound translation factors.

Its function is as follows. Forms part of the ribosomal stalk which helps the ribosome interact with GTP-bound translation factors. Is thus essential for accurate translation. This Desulfovibrio desulfuricans (strain ATCC 27774 / DSM 6949 / MB) protein is Large ribosomal subunit protein bL12.